Consider the following 519-residue polypeptide: Probable cytosol aminopeptidase (519 aa).

2 residues coordinate Mn(2+): lysine 251 and aspartate 256. Lysine 263 is a catalytic residue. The Mn(2+) site is built by aspartate 274, aspartate 333, and glutamate 335. Residue arginine 337 is part of the active site. Over residues 487–502 (VAPAAPAAPAAPAARP) the composition is skewed to low complexity. The segment at 487–519 (VAPAAPAAPAAPAARPAAKRTGRSQGGLKRTAP) is disordered.

It belongs to the peptidase M17 family. The cofactor is Mn(2+).

The protein localises to the cytoplasm. It carries out the reaction Release of an N-terminal amino acid, Xaa-|-Yaa-, in which Xaa is preferably Leu, but may be other amino acids including Pro although not Arg or Lys, and Yaa may be Pro. Amino acid amides and methyl esters are also readily hydrolyzed, but rates on arylamides are exceedingly low.. It catalyses the reaction Release of an N-terminal amino acid, preferentially leucine, but not glutamic or aspartic acids.. Its function is as follows. Presumably involved in the processing and regular turnover of intracellular proteins. Catalyzes the removal of unsubstituted N-terminal amino acids from various peptides. This Verminephrobacter eiseniae (strain EF01-2) protein is Probable cytosol aminopeptidase.